The primary structure comprises 306 residues: MNNGQATITRNGGRFEIRCRHLDRDYTMPLPNATSNDNFLDCIKFITECVGFDYVSSGFKLIANVNDFQHLNGNSTLLIGKTKIGPLILKKVRSLPCCNDALFRNEFRILAKMHGILRLKNDVNGHKYGIILERCYKPKINFSNFVTAINDLDVFHSSNQHLLHGDANPDNIMSDSEGYLKLVDPVCLLENQVNMVNIEYESLTQEAEKKVFINSLLQLVEKQMSATIDEIYVNLKEVNPSFNLEHGLKLSDLLDNIDVYNSDHWKLMLNHRPMMPELSVLNDLTYYDTGEVRDLVTEDLDDEDDV.

The polypeptide is Non-structural protein 3 (Segment-7) (Banna virus (BAV)).